The following is a 102-amino-acid chain: MSFKELITQDQRLVVLRVLSEAGYDANESIINDGLDLYGHDISRDLVRTHLSWLEEQGLLTIERLKDGYMVASITQRWLRCSTRSCGSGRRKTPPPENLNTV.

This is an uncharacterized protein from Haemophilus influenzae (strain ATCC 51907 / DSM 11121 / KW20 / Rd).